Reading from the N-terminus, the 175-residue chain is Type II restriction enzyme NgoBV (175 aa).

The catalysed reaction is Endonucleolytic cleavage of DNA to give specific double-stranded fragments with terminal 5'-phosphates.. A P subtype restriction enzyme that recognizes the double-stranded sequence 5'-GGNNCC-3'; the cleavage site is unknown. This is Type II restriction enzyme NgoBV (ngoBVR) from Neisseria gonorrhoeae.